The following is a 387-amino-acid chain: Phosphoglycerate kinase (387 aa).

Residues 21–23, R36, 59–62, R113, and R146 each bind substrate; these read DLN and HLGR. Residues K197, E314, and 340–343 each bind ATP; that span reads GGDT.

The protein belongs to the phosphoglycerate kinase family. In terms of assembly, monomer.

The protein localises to the cytoplasm. The enzyme catalyses (2R)-3-phosphoglycerate + ATP = (2R)-3-phospho-glyceroyl phosphate + ADP. It participates in carbohydrate degradation; glycolysis; pyruvate from D-glyceraldehyde 3-phosphate: step 2/5. This Pseudomonas entomophila (strain L48) protein is Phosphoglycerate kinase.